Reading from the N-terminus, the 428-residue chain is MNSTALEPTLEFARKLDQEDPLRHFRDEFYLPPNSIYMDGNSLGLLSKRAEKTLFTILQDWKLLGIDGWTKGTYPWFDLSEKIGAMLAPLVGASPEEVIATGSTTVNLHQLVSTFYQPEGKRTKILADELTFPSDIYALQSQLRIHGYDPSTHLIRVKSRDGRFLEEEDIIAAMSEDVALVVLPTVLYRSGQILDIQLLTDEAHKRGILIGFDACHSIGAIPHSFSEWGVDFAFWCNYKYMNGGPGCVAGLYVHRKHFGSAPGLAGWFGSKKDKQFDMEHTFTPSLTAGAYQIGTPHLLSLAPLIGSLEIFQEAGIERIRQKSLQLTNYFMYLIEQELSHFGFIIGNPKDDVRRGGHISLEHEEAARICKSLKENGVIPDFRAPNIIRLAPIALYTSYEEVWNVVQIMKKIMQEKQYKKFSNEREVVA.

Pyridoxal 5'-phosphate is bound by residues Thr-104, Thr-105, 132-135 (FPSD), Asp-213, His-216, and Tyr-238. Lys-239 is subject to N6-(pyridoxal phosphate)lysine. Trp-267 and Thr-295 together coordinate pyridoxal 5'-phosphate.

This sequence belongs to the kynureninase family. In terms of assembly, homodimer. The cofactor is pyridoxal 5'-phosphate.

It catalyses the reaction L-kynurenine + H2O = anthranilate + L-alanine + H(+). The catalysed reaction is 3-hydroxy-L-kynurenine + H2O = 3-hydroxyanthranilate + L-alanine + H(+). Its pathway is amino-acid degradation; L-kynurenine degradation; L-alanine and anthranilate from L-kynurenine: step 1/1. The protein operates within cofactor biosynthesis; NAD(+) biosynthesis; quinolinate from L-kynurenine: step 2/3. Catalyzes the cleavage of L-kynurenine (L-Kyn) and L-3-hydroxykynurenine (L-3OHKyn) into anthranilic acid (AA) and 3-hydroxyanthranilic acid (3-OHAA), respectively. This Geobacillus thermodenitrificans (strain NG80-2) protein is Kynureninase.